Consider the following 779-residue polypeptide: Endonuclease MutS2 (779 aa).

Position 328–335 (328–335 (GPNTGGKT)) interacts with ATP. Residues 704–779 (LDLRGKRYEE…GSGATIVTLG (76 aa)) enclose the Smr domain.

This sequence belongs to the DNA mismatch repair MutS family. MutS2 subfamily. Homodimer. Binds to stalled ribosomes, contacting rRNA.

Its function is as follows. Endonuclease that is involved in the suppression of homologous recombination and thus may have a key role in the control of bacterial genetic diversity. Functionally, acts as a ribosome collision sensor, splitting the ribosome into its 2 subunits. Detects stalled/collided 70S ribosomes which it binds and splits by an ATP-hydrolysis driven conformational change. Acts upstream of the ribosome quality control system (RQC), a ribosome-associated complex that mediates the extraction of incompletely synthesized nascent chains from stalled ribosomes and their subsequent degradation. Probably generates substrates for RQC. The polypeptide is Endonuclease MutS2 (Streptococcus pyogenes serotype M49 (strain NZ131)).